The sequence spans 535 residues: ABC1 family protein C10F6.14c (535 aa).

The protein belongs to the protein kinase superfamily. ADCK protein kinase family.

This chain is ABC1 family protein C10F6.14c, found in Schizosaccharomyces pombe (strain 972 / ATCC 24843) (Fission yeast).